A 241-amino-acid polypeptide reads, in one-letter code: Ribosomal RNA small subunit methyltransferase J (241 aa).

S-adenosyl-L-methionine-binding positions include 94 to 95 (RD) and Asp163.

It belongs to the methyltransferase superfamily. RsmJ family.

The protein localises to the cytoplasm. The catalysed reaction is guanosine(1516) in 16S rRNA + S-adenosyl-L-methionine = N(2)-methylguanosine(1516) in 16S rRNA + S-adenosyl-L-homocysteine + H(+). Functionally, specifically methylates the guanosine in position 1516 of 16S rRNA. The chain is Ribosomal RNA small subunit methyltransferase J from Francisella tularensis subsp. novicida (strain U112).